A 118-amino-acid polypeptide reads, in one-letter code: Galanin peptides (118 aa).

Positions 1–19 are cleaved as a signal peptide; it reads MHRCVGGVCVSLIVCAFLT. A propeptide spanning residues 20 to 30 is cleaved from the precursor; that stretch reads ETLGMVIAAKE. Alanine 61 is modified (alanine amide).

Belongs to the galanin family. Strongly expressed in brain and stomach, moderately in the eye, and very weakly in heart, kidney and gills. Not detected in liver.

Its subcellular location is the secreted. Functionally, endocrine hormone of the central and peripheral nervous systems that binds and activates the G protein-coupled receptors GALR1 (galr1a and galr1b) and GALR2 (galr2a and galr2b). This small neuropeptide may regulate diverse physiologic functions including contraction of smooth muscle of the gastrointestinal and genitourinary tract, growth hormone and insulin release and adrenal secretion. This is Galanin peptides from Danio rerio (Zebrafish).